A 206-amino-acid polypeptide reads, in one-letter code: Large ribosomal subunit protein uL4 (206 aa).

This sequence belongs to the universal ribosomal protein uL4 family. Part of the 50S ribosomal subunit.

One of the primary rRNA binding proteins, this protein initially binds near the 5'-end of the 23S rRNA. It is important during the early stages of 50S assembly. It makes multiple contacts with different domains of the 23S rRNA in the assembled 50S subunit and ribosome. Functionally, forms part of the polypeptide exit tunnel. The polypeptide is Large ribosomal subunit protein uL4 (Rhodopseudomonas palustris (strain HaA2)).